Reading from the N-terminus, the 124-residue chain is Transcription initiation factor TFIID subunit 13 (124 aa).

The span at 1–16 (MADEEEDPTFEEENEE) shows a compositional bias: acidic residues. Positions 1-28 (MADEEEDPTFEEENEEIGGGAEGGQGKR) are disordered. The 43-residue stretch at 32–74 (FSKELRCMMYGFGDDQNPYTESVDILEDLVIEFITEMTHKAMS) folds into the Histone-fold domain.

This sequence belongs to the TAF13 family. Component of the TFIID basal transcription factor complex, composed of TATA-box-binding protein TBP, and a number of TBP-associated factors (TAFs), including TAF1, TAF2, TAF3, TAF4, TAF5, TAF6, TAF7, TAF8, TAF9, TAF10, TAF11, TAF12 and TAF13. Interacts with TBP, and more strongly with TAF10 and TAF11.

It is found in the nucleus. Its function is as follows. The TFIID basal transcription factor complex plays a major role in the initiation of RNA polymerase II (Pol II)-dependent transcription. TFIID recognizes and binds promoters via its subunit TBP, a TATA-box-binding protein, and promotes assembly of the pre-initiation complex (PIC). The TFIID complex consists of TBP and TBP-associated factors (TAFs), including TAF1, TAF2, TAF3, TAF4, TAF5, TAF6, TAF7, TAF8, TAF9, TAF10, TAF11, TAF12 and TAF13. TAF13, together with TAF11 and TBP, play key roles during promoter binding by the TFIID and TFIIA transcription factor complexes. This Bos taurus (Bovine) protein is Transcription initiation factor TFIID subunit 13.